Reading from the N-terminus, the 556-residue chain is Phospholipase D (556 aa).

Residues 1–47 form the signal peptide; sequence MTSDQRPARLPTHKGKLLAPHRLHRLIPVSVALTTVCAALPSSTAYA. The PLD phosphodiesterase 1 domain occupies 210-237; it reads SLSWNHSKLLVVDGKTAITGGINGWKDD. Residues 326–360 form a disordered region; that stretch reads SDPSSGYHPDLPTAPDTKCTVGLHDNTNADRDYDT. Residues 484-511 enclose the PLD phosphodiesterase 2 domain; the sequence is KPYALHHKLVSVDDSAFYIGSKNLYPAW.

This sequence belongs to the phospholipase D family. Post-translationally, probably has at least 1 disulfide bond.

The protein resides in the secreted. The catalysed reaction is a 1,2-diacyl-sn-glycero-3-phosphocholine + H2O = a 1,2-diacyl-sn-glycero-3-phosphate + choline + H(+). Inhibited by mercaptoethanol and dithiothreitol. Functionally, a reversible phospholipase active on phosphatidylcholine (PC) and phosphatidylethanolamine. Lysophosphatidylcholine and egg sphingomyelin are hydrolyzed about 50 times and 100 times more slowly than PC, respectively. During the transphosphatidylation reaction straight-chain hydroxy compounds, such as triethyleneglycol and triethyleneglycol monomethyl ether, were phosphatidylated in good yield, as were monosaccharides. Disaccharides and sugar alcohol reacted slowly, while N-acetyl-D-galactosamine, D-galactosamine and D-galacturonic acid were not phosphatidylated. This Streptomyces antibioticus protein is Phospholipase D.